Consider the following 275-residue polypeptide: 2,3,4,5-tetrahydropyridine-2,6-dicarboxylate N-succinyltransferase (275 aa).

Substrate is bound by residues arginine 106 and aspartate 143.

This sequence belongs to the transferase hexapeptide repeat family. As to quaternary structure, homotrimer.

It is found in the cytoplasm. It catalyses the reaction (S)-2,3,4,5-tetrahydrodipicolinate + succinyl-CoA + H2O = (S)-2-succinylamino-6-oxoheptanedioate + CoA. It functions in the pathway amino-acid biosynthesis; L-lysine biosynthesis via DAP pathway; LL-2,6-diaminopimelate from (S)-tetrahydrodipicolinate (succinylase route): step 1/3. This is 2,3,4,5-tetrahydropyridine-2,6-dicarboxylate N-succinyltransferase from Burkholderia ambifaria (strain ATCC BAA-244 / DSM 16087 / CCUG 44356 / LMG 19182 / AMMD) (Burkholderia cepacia (strain AMMD)).